Reading from the N-terminus, the 287-residue chain is Beta-lactamase GES-2 (287 aa).

The first 18 residues, 1–18, serve as a signal peptide directing secretion; it reads MRFIHALLLAGIAHSAYA. Residues Cys-63 and Cys-233 are joined by a disulfide bond. The active-site Nucleophile; acyl-ester intermediate is Ser-64. A beta-lactam-binding residues include Lys-67, Ser-125, and Glu-161.

It belongs to the class-A beta-lactamase family.

The enzyme catalyses a beta-lactam + H2O = a substituted beta-amino acid. With respect to regulation, inhibited by the beta-lactamase-blocking agents clavulanic acid, sulbactam and tazobactam. In terms of biological role, extended-spectrum beta-lactamase (ESBL) which confers resistance to penicillins, as well as first, third and fourth-generation cephalosporins. Has modest carbapenem-hydrolyzing activity. Has cefotaxime-hydrolyzing activity. The protein is Beta-lactamase GES-2 of Pseudomonas aeruginosa.